The primary structure comprises 81 residues: Cytotoxin 3d (81 aa).

A signal peptide spans 1-21 (MKTLLLTLVVVTIVCLDLGYT). 4 disulfide bridges follow: Cys24–Cys42, Cys35–Cys59, Cys63–Cys74, and Cys75–Cys80.

Belongs to the three-finger toxin family. Short-chain subfamily. Type IA cytotoxin sub-subfamily. As to quaternary structure, monomer in solution; Homodimer and oligomer in the presence of negatively charged lipids forming a pore with a size ranging between 20 and 30 Angstroms. In terms of tissue distribution, expressed by the venom gland.

It localises to the secreted. The protein localises to the target cell membrane. Its function is as follows. Shows cytolytic activity on many different cells by forming pore in lipid membranes. In vivo, increases heart rate or kills the animal by cardiac arrest. In addition, it binds to heparin with high affinity, interacts with Kv channel-interacting protein 1 (KCNIP1) in a calcium-independent manner, and binds to integrin alpha-V/beta-3 (ITGAV/ITGB3) with moderate affinity. The sequence is that of Cytotoxin 3d from Naja atra (Chinese cobra).